The following is a 455-amino-acid chain: Ribosomal protein uS12 methylthiotransferase RimO (455 aa).

Residues R10–R126 enclose the MTTase N-terminal domain. 6 residues coordinate [4Fe-4S] cluster: C19, C55, C89, C164, C168, and C171. The Radical SAM core domain maps to S150 to R380. Residues R383–D451 enclose the TRAM domain.

Belongs to the methylthiotransferase family. RimO subfamily. It depends on [4Fe-4S] cluster as a cofactor.

The protein resides in the cytoplasm. It catalyses the reaction L-aspartate(89)-[ribosomal protein uS12]-hydrogen + (sulfur carrier)-SH + AH2 + 2 S-adenosyl-L-methionine = 3-methylsulfanyl-L-aspartate(89)-[ribosomal protein uS12]-hydrogen + (sulfur carrier)-H + 5'-deoxyadenosine + L-methionine + A + S-adenosyl-L-homocysteine + 2 H(+). Catalyzes the methylthiolation of an aspartic acid residue of ribosomal protein uS12. The chain is Ribosomal protein uS12 methylthiotransferase RimO from Syntrophotalea carbinolica (strain DSM 2380 / NBRC 103641 / GraBd1) (Pelobacter carbinolicus).